The chain runs to 118 residues: DNA-binding protein Msp_0595 (118 aa).

Positions 15-44 (LKQQQLAAQQQQGASLEQMQQEEQARQQFE) are enriched in low complexity. The tract at residues 15-45 (LKQQQLAAQQQQGASLEQMQQEEQARQQFEN) is disordered.

This sequence belongs to the PDCD5 family.

In Methanosphaera stadtmanae (strain ATCC 43021 / DSM 3091 / JCM 11832 / MCB-3), this protein is DNA-binding protein Msp_0595.